The primary structure comprises 473 residues: Exodeoxyribonuclease I (473 aa).

Residues 9–188 (IYDYESFGVN…AMADVYATIA (180 aa)) enclose the Exonuclease domain. Positions 11, 13, and 182 each coordinate Mg(2+). Glu13 lines the substrate pocket. An ExoI SH3-like domain is found at 198 to 353 (PKLFQYFFEN…KVADIFNEER (156 aa)). The region spanning 356–472 (ASNDNVETEL…QVYEYGIKLL (117 aa)) is the ExoI C-terminal domain.

Monomer. Interacts with ssb (via C-terminus); this interaction stimulates the exonuclease activity by recruiting the enzyme to its substrate. Requires Mg(2+) as cofactor.

It catalyses the reaction Exonucleolytic cleavage in the 3'- to 5'-direction to yield nucleoside 5'-phosphates.. Degrades single-stranded DNA (ssDNA) in a highly processive manner. Also functions as a DNA deoxyribophosphodiesterase that releases deoxyribose-phosphate moieties following the cleavage of DNA at an apurinic/apyrimidinic (AP) site by either an AP endonuclease or AP lyase. Involved in genome maintenance but probably not in phase variation, which contributes to the virulence and disease. In Haemophilus influenzae (strain ATCC 51907 / DSM 11121 / KW20 / Rd), this protein is Exodeoxyribonuclease I (sbcB).